Consider the following 387-residue polypeptide: Pepsin II-2/3 (387 aa).

A signal peptide spans 1 to 15 (MKWLLLLGLLALSEC). A propeptide spans 16–59 (IVHKVPLVRKKSLRKNLIEKGLLQDYLKTHTPNPATKYFPKETF) (activation peptide). One can recognise a Peptidase A1 domain in the interval 75–384 (YFGTISIGTP…DRANNQLGLA (310 aa)). The active site involves aspartate 93. A disulfide bridge connects residues cysteine 106 and cysteine 111. The residue at position 129 (serine 129) is a Phosphoserine. A disulfide bond links cysteine 267 and cysteine 271. Residue aspartate 276 is part of the active site. The cysteines at positions 310 and 343 are disulfide-linked.

This sequence belongs to the peptidase A1 family.

The protein resides in the secreted. It catalyses the reaction Preferential cleavage: hydrophobic, preferably aromatic, residues in P1 and P1' positions. Cleaves 1-Phe-|-Val-2, 4-Gln-|-His-5, 13-Glu-|-Ala-14, 14-Ala-|-Leu-15, 15-Leu-|-Tyr-16, 16-Tyr-|-Leu-17, 23-Gly-|-Phe-24, 24-Phe-|-Phe-25 and 25-Phe-|-Tyr-26 bonds in the B chain of insulin.. Its function is as follows. Shows particularly broad specificity; although bonds involving phenylalanine and leucine are preferred, many others are also cleaved to some extent. In Oryctolagus cuniculus (Rabbit), this protein is Pepsin II-2/3.